Reading from the N-terminus, the 311-residue chain is Meteorin-like protein (311 aa).

A compositionally biased stretch (low complexity) spans 1 to 13 (MRGAARAAWGRAG). Positions 1-24 (MRGAARAAWGRAGQPWPRPPAPGP) are disordered. A signal peptide spans 1 to 45 (MRGAARAAWGRAGQPWPRPPAPGPPPPPLPLLLLLLAGLLGGAGA). 5 disulfides stabilise this stretch: cysteine 52-cysteine 75, cysteine 107-cysteine 143, cysteine 188-cysteine 260, cysteine 191-cysteine 284, and cysteine 201-cysteine 306.

This sequence belongs to the meteorin family. In terms of tissue distribution, highly expressed in the skeletal muscle, in subcutaneous adipose tissue, epididymal white adipose tissue depots and heart. Also expressed in brown adipose tissues and kidney.

It localises to the secreted. In terms of biological role, hormone induced following exercise or cold exposure that promotes energy expenditure. Induced either in the skeletal muscle after exercise or in adipose tissue following cold exposure and is present in the circulation. Able to stimulate energy expenditure associated with the browning of the white fat depots and improves glucose tolerance. Does not promote an increase in a thermogenic gene program via direct action on adipocytes, but acts by stimulating several immune cell subtypes to enter the adipose tissue and activate their prothermogenic actions. Stimulates an eosinophil-dependent increase in IL4 expression and promotes alternative activation of adipose tissue macrophages, which are required for the increased expression of the thermogenic and anti-inflammatory gene programs in fat. Required for some cold-induced thermogenic responses, suggesting a role in metabolic adaptations to cold temperatures. The polypeptide is Meteorin-like protein (METRNL) (Homo sapiens (Human)).